Here is a 456-residue protein sequence, read N- to C-terminus: Gamma-aminobutyric acid receptor subunit alpha-1 (456 aa).

The first 27 residues, 1–27 (MRKSPGLSDCLWAWILLLSTLTGRSYG), serve as a signal peptide directing secretion. Residues 28–253 (QPSLQDELKD…FHLKRKIGYF (226 aa)) lie on the Extracellular side of the membrane. Residue asparagine 38 is glycosylated (N-linked (GlcNAc...) asparagine). Arginine 94 is a 4-aminobutanoate binding site. Asparagine 138 carries an N-linked (GlcNAc...) asparagine glycan. Residue threonine 157 participates in 4-aminobutanoate binding. Cysteine 166 and cysteine 180 are disulfide-bonded. Residues 254 to 274 (VIQTYLPCIMTVILSQVSFWL) traverse the membrane as a helical segment. A 3alpha-hydroxy-5alpha-pregnan-11,20-dione-binding site is contributed by tryptophan 273. Residues 275–279 (NRESV) are Cytoplasmic-facing. Residues 280–301 (PARTVFGVTTVLTMTTLSISAR) traverse the membrane as a helical segment. At 302–311 (NSLPKVAYAT) the chain is on the extracellular side. A helical transmembrane segment spans residues 312-333 (AMDWFIAVCYAFVFSALIEFAT). Residues 334–421 (VNYFTKRGYA…TFNSVSKIDR (88 aa)) lie on the Cytoplasmic side of the membrane. The helical transmembrane segment at 422-441 (LSRIAFPLLFGIFNLVYWAT) threads the bilayer. The Extracellular segment spans residues 442-456 (YLNREPQLKAPTPHQ).

Belongs to the ligand-gated ion channel (TC 1.A.9) family. Gamma-aminobutyric acid receptor (TC 1.A.9.5) subfamily. GABRA1 sub-subfamily. In terms of assembly, heteropentamer, formed by a combination of alpha (GABRA1-6), beta (GABRB1-3), gamma (GABRG1-3), delta (GABRD), epsilon (GABRE), rho (GABRR1-3), pi (GABRP) and theta (GABRQ) subunits, each subunit exhibiting distinct physiological and pharmacological properties. Interacts with UBQLN1. Interacts with TRAK1. Interacts with KIF21B. Identified in a complex of 720 kDa composed of LHFPL4, NLGN2, GABRA1, GABRB2, GABRG2 and GABRB3. Interacts with LHFPL4. Interacts with NLGN2. Interacts with SHISA7; interaction leads regulation of GABAAR trafficking, channel deactivation kinetics and pharmacology.

Its subcellular location is the postsynaptic cell membrane. It is found in the cell membrane. The protein localises to the cytoplasmic vesicle membrane. It catalyses the reaction chloride(in) = chloride(out). Its activity is regulated as follows. Allosterically activated by benzodiazepines and the anesthetic alphaxalone. Allosterically activated by pentobarbital. Inhibited by the antagonist bicuculline. Potentiated by histamine. Alpha subunit of the heteropentameric ligand-gated chloride channel gated by Gamma-aminobutyric acid (GABA), a major inhibitory neurotransmitter in the brain. GABA-gated chloride channels, also named GABA(A) receptors (GABAAR), consist of five subunits arranged around a central pore and contain GABA active binding site(s) located at the alpha and beta subunit interface(s). When activated by GABA, GABAARs selectively allow the flow of chloride anions across the cell membrane down their electrochemical gradient. Alpha-1/GABRA1-containing GABAARs are largely synaptic. Chloride influx into the postsynaptic neuron following GABAAR opening decreases the neuron ability to generate a new action potential, thereby reducing nerve transmission. GABAARs containing alpha-1 and beta-2 or -3 subunits exhibit synaptogenic activity; the gamma-2 subunit being necessary but not sufficient to induce rapid synaptic contacts formation. GABAARs function also as histamine receptor where histamine binds at the interface of two neighboring beta subunits and potentiates GABA response. GABAARs containing alpha, beta and epsilon subunits also permit spontaneous chloride channel activity while preserving the structural information required for GABA-gated openings. Alpha-1-mediated plasticity in the orbitofrontal cortex regulates context-dependent action selection. Together with rho subunits, may also control neuronal and glial GABAergic transmission in the cerebellum. This is Gamma-aminobutyric acid receptor subunit alpha-1 from Homo sapiens (Human).